The primary structure comprises 77 residues: Acyl carrier protein (77 aa).

In terms of domain architecture, Carrier spans 2 to 77; that stretch reads SDIEQRVKNV…LAIDYVKSHQ (76 aa). S37 carries the O-(pantetheine 4'-phosphoryl)serine modification.

Belongs to the acyl carrier protein (ACP) family. In terms of processing, 4'-phosphopantetheine is transferred from CoA to a specific serine of apo-ACP by AcpS. This modification is essential for activity because fatty acids are bound in thioester linkage to the sulfhydryl of the prosthetic group.

Its subcellular location is the cytoplasm. It functions in the pathway lipid metabolism; fatty acid biosynthesis. Carrier of the growing fatty acid chain in fatty acid biosynthesis. The sequence is that of Acyl carrier protein from Leucothrix mucor.